Consider the following 516-residue polypeptide: Extracellular endo-inulinase inu2 (516 aa).

Residues 1 to 23 (MLNPKVAYMVWMTCLGLTLPSQA) form the signal peptide. Substrate-binding positions include 41–43 (MNE) and asparagine 61. Glutamate 43 is an active-site residue. N-linked (GlcNAc...) asparagine glycans are attached at residues asparagine 108 and asparagine 109. Substrate is bound at residue aspartate 176. N-linked (GlcNAc...) asparagine glycosylation is present at asparagine 210. Asparagine 320 is a binding site for substrate. Residue asparagine 372 is glycosylated (N-linked (GlcNAc...) asparagine).

Belongs to the glycosyl hydrolase 32 family.

The protein resides in the secreted. It catalyses the reaction Endohydrolysis of (2-&gt;1)-beta-D-fructosidic linkages in inulin.. Endo-inulinase involved in utilization of the plant storage polymer inulin, consisting of fructooligosaccharides with a degree of polymerization (DP) value from 2 to 60. The sequence is that of Extracellular endo-inulinase inu2 (inu2) from Aspergillus ficuum.